Consider the following 520-residue polypeptide: Diacylglycerol O-acyltransferase 1 (520 aa).

2 disordered regions span residues 28 to 57 and 72 to 116; these read RRKSRSDSSNGLLLSGSDNNSPSDDVGAPA and QGTA…AHRR. Residues 34 to 54 show a composition bias toward low complexity; sequence DSSNGLLLSGSDNNSPSDDVG. Positions 81–98 are enriched in gly residues; it reads NNGGGDNNGGGRGGGEGR. 7 helical membrane-spanning segments follow: residues 126–146, 176–196, 207–227, 233–253, 276–296, 317–337, and 365–385; these read AIFKQSHAGLFNLCVVVLIAV, WPLFMCCISLSIFPLAAFTVE, PVVIFLHIIITMTEVLYPVYV, SAFLSGVTLMLLTCIVWLKLV, VSYYVSLKSLAYFMVAPTLCY, KLVIFTGFMGFIIEQYINPIV, and VWLCMFYCFFHLWLNILAELL. An FYXDWWN motif motif is present at residues 392 to 398; the sequence is FYKDWWN. 3 helical membrane passes run 434–454, 457–477, and 487–507; these read LAIIIAFLVSAVFHELCIAVP, LFKLWAFLGIMFQVPLVFITN, and VGNMIFWFIFCIFGQPMCVLL. His447 is an active-site residue.

It belongs to the membrane-bound acyltransferase family. Sterol o-acyltransferase subfamily. Interacts with LPCAT2 and LPAT2. As to expression, ubiquitous. Highest expression in young developing seeds.

It is found in the plastid. It localises to the chloroplast membrane. Its subcellular location is the endoplasmic reticulum membrane. It carries out the reaction an acyl-CoA + a 1,2-diacyl-sn-glycerol = a triacyl-sn-glycerol + CoA. The catalysed reaction is 1,2-di-(9Z-octadecenoyl)-sn-glycerol + (9Z)-octadecenoyl-CoA = 1,2,3-tri-(9Z-octadecenoyl)-glycerol + CoA. The protein operates within glycerolipid metabolism; triacylglycerol biosynthesis. Its activity is regulated as follows. Partially inhibited by niacin. Functionally, major contributor to triacylglycerol (TAG) synthesis and oil accumulation in seeds. Catalyzes the acylation of the sn-3 hydroxy group of sn-1,2-diacylglycerol using acyl-CoA. Can use palmitoyl-CoA and oleoyl-CoA as substrates. Can use oleoyl-CoA and linoleoyl-CoA as substrates. Has substrate preference for oleoyl-CoA compared to linoleoyl-CoA. Has complementary functions with PDAT1 that are essential for triacylglycerol synthesis and normal development of both seeds and pollen. This is Diacylglycerol O-acyltransferase 1 from Arabidopsis thaliana (Mouse-ear cress).